The following is a 406-amino-acid chain: Arginine deiminase (406 aa).

C396 serves as the catalytic Amidino-cysteine intermediate.

The protein belongs to the arginine deiminase family.

The protein resides in the cytoplasm. The enzyme catalyses L-arginine + H2O = L-citrulline + NH4(+). The protein operates within amino-acid degradation; L-arginine degradation via ADI pathway; carbamoyl phosphate from L-arginine: step 1/2. This chain is Arginine deiminase, found in Salmonella typhimurium (strain LT2 / SGSC1412 / ATCC 700720).